A 217-amino-acid chain; its full sequence is 3,4-dihydroxy-2-butanone 4-phosphate synthase (217 aa).

D-ribulose 5-phosphate is bound by residues 37-38 (RE), Asp42, 150-154 (RGGHT), and Glu174. Glu38 is a binding site for Mg(2+). His153 lines the Mg(2+) pocket.

This sequence belongs to the DHBP synthase family. Homodimer. Requires Mg(2+) as cofactor. Mn(2+) is required as a cofactor.

The enzyme catalyses D-ribulose 5-phosphate = (2S)-2-hydroxy-3-oxobutyl phosphate + formate + H(+). Its pathway is cofactor biosynthesis; riboflavin biosynthesis; 2-hydroxy-3-oxobutyl phosphate from D-ribulose 5-phosphate: step 1/1. Its function is as follows. Catalyzes the conversion of D-ribulose 5-phosphate to formate and 3,4-dihydroxy-2-butanone 4-phosphate. The chain is 3,4-dihydroxy-2-butanone 4-phosphate synthase from Shigella boydii serotype 18 (strain CDC 3083-94 / BS512).